The primary structure comprises 258 residues: Pro-thyrotropin-releasing hormone-A (258 aa).

The first 22 residues, 1-22 (MKSACLIILASLVVCNLTLARG), serve as a signal peptide directing secretion. Q78 carries the pyrrolidone carboxylic acid modification. P80 is subject to Proline amide. Composition is skewed to basic and acidic residues over residues 84–98 (YQEELEKRQHPGKRE) and 107–119 (EVQKRQHPGKRED). A disordered region spans residues 84–124 (YQEELEKRQHPGKREEDEDEDYDEVQKRQHPGKREDEFDSF). Position 92 is a pyrrolidone carboxylic acid (Q92). P94 carries the proline amide modification. Q112 is modified (pyrrolidone carboxylic acid). The residue at position 114 (P114) is a Proline amide. At Q131 the chain carries Pyrrolidone carboxylic acid. At P133 the chain carries Proline amide. Residue Q156 is modified to Pyrrolidone carboxylic acid. P158 bears the Proline amide mark. 2 disordered regions span residues 166-215 (YSKR…PCDV) and 236-258 (SRAEKRQHPGKRSAPVEDLTEQE). Q170 bears the Pyrrolidone carboxylic acid mark. P172 is subject to Proline amide. Residues 184–193 (GDLRELEKRQ) show a composition bias toward basic and acidic residues. Q193 is subject to Pyrrolidone carboxylic acid. Proline amide is present on P195. A Pyrrolidone carboxylic acid modification is found at Q242. P244 is modified (proline amide).

The protein belongs to the TRH family.

It localises to the secreted. In terms of biological role, functions as a regulator of the biosynthesis of TSH in the anterior pituitary gland and as a neurotransmitter/ neuromodulator in the central and peripheral nervous systems. In Oncorhynchus nerka (Sockeye salmon), this protein is Pro-thyrotropin-releasing hormone-A (trha).